The sequence spans 284 residues: MLRVAVPNKGALSEPATEILAEAGYRRRTDSKDLTVIDPVNNVEFFFLRPKDIAIYVGSGELDFGITGRDLVCDSGAQVRERLALGFGSSSFRYAAPAGRNWTTADLAGMRIATAYPNLVRKDLATKGIEATVIRLDGAVEISVQLGVADAIADVVGSGRTLSQHDLVAFGEPLCDSEAVLIERAGTDGQDQTEARDQLVARVQGVVFGQQYLMLDYDCPRSALKKATAITPGLESPTIAPLADPDWVAIRALVPRRDVNGIMDELAAIGAKAILASDIRFCRF.

Belongs to the ATP phosphoribosyltransferase family. Long subfamily. As to quaternary structure, equilibrium between an active dimeric form, an inactive hexameric form and higher aggregates. Interconversion between the various forms is largely reversible and is influenced by the natural substrates and inhibitors of the enzyme. Requires Mg(2+) as cofactor.

It localises to the cytoplasm. The enzyme catalyses 1-(5-phospho-beta-D-ribosyl)-ATP + diphosphate = 5-phospho-alpha-D-ribose 1-diphosphate + ATP. Its pathway is amino-acid biosynthesis; L-histidine biosynthesis; L-histidine from 5-phospho-alpha-D-ribose 1-diphosphate: step 1/9. With respect to regulation, feedback inhibited by histidine. Catalyzes the condensation of ATP and 5-phosphoribose 1-diphosphate to form N'-(5'-phosphoribosyl)-ATP (PR-ATP). Has a crucial role in the pathway because the rate of histidine biosynthesis seems to be controlled primarily by regulation of HisG enzymatic activity. This chain is ATP phosphoribosyltransferase (hisG), found in Mycobacterium bovis (strain ATCC BAA-935 / AF2122/97).